A 153-amino-acid polypeptide reads, in one-letter code: 6,7-dimethyl-8-ribityllumazine synthase 1 (153 aa).

Residues F16, 47-49, and 76-78 contribute to the 5-amino-6-(D-ribitylamino)uracil site; these read ALE and MVI. 81–82 serves as a coordination point for (2S)-2-hydroxy-3-oxobutyl phosphate; sequence ET. H84 (proton donor) is an active-site residue. Residue N109 coordinates 5-amino-6-(D-ribitylamino)uracil. R123 is a (2S)-2-hydroxy-3-oxobutyl phosphate binding site.

It belongs to the DMRL synthase family.

It catalyses the reaction (2S)-2-hydroxy-3-oxobutyl phosphate + 5-amino-6-(D-ribitylamino)uracil = 6,7-dimethyl-8-(1-D-ribityl)lumazine + phosphate + 2 H2O + H(+). It participates in cofactor biosynthesis; riboflavin biosynthesis; riboflavin from 2-hydroxy-3-oxobutyl phosphate and 5-amino-6-(D-ribitylamino)uracil: step 1/2. Catalyzes the formation of 6,7-dimethyl-8-ribityllumazine by condensation of 5-amino-6-(D-ribitylamino)uracil with 3,4-dihydroxy-2-butanone 4-phosphate. This is the penultimate step in the biosynthesis of riboflavin. This is 6,7-dimethyl-8-ribityllumazine synthase 1 from Rhizobium meliloti (strain 1021) (Ensifer meliloti).